The sequence spans 343 residues: uncharacterized protein (343 aa).

2 disordered regions span residues 1–27 (MIRE…ERMT) and 205–247 (SGGL…SKRQ). The span at 16–27 (RARDSRAQERMT) shows a compositional bias: basic and acidic residues. The segment covering 219 to 228 (GQDDGNTDDG) has biased composition (acidic residues). The span at 229 to 247 (NDVHQKGRGEVESKTSKRQ) shows a compositional bias: basic and acidic residues.

In terms of biological role, dispensable for normal development and fertility. This is an uncharacterized protein from Bos taurus (Bovine).